The chain runs to 120 residues: U13-lycotoxin-Ls1f (120 aa).

A signal peptide spans 1-16 (MKILFVLISILYAVYC). Residues 17 to 54 (FSSEEDVDSAYLANELEPVEDINSEQYAALEPKEEQER) constitute a propeptide that is removed on maturation. 4 cysteine pairs are disulfide-bonded: cysteine 56–cysteine 70, cysteine 63–cysteine 76, cysteine 69–cysteine 87, and cysteine 78–cysteine 85. Residues 56–95 (CAGMGQDCKDDCDCCLNIATCNCWFGRYFCSCTFGDYQTC) form the Agouti domain.

Belongs to the neurotoxin 05 (agouti) family. Post-translationally, contains 6 disulfide bonds. As to expression, expressed by the venom gland.

The protein localises to the secreted. This chain is U13-lycotoxin-Ls1f, found in Lycosa singoriensis (Wolf spider).